Reading from the N-terminus, the 738-residue chain is Eukaryotic translation initiation factor 3 subunit B (738 aa).

The segment covering Met-1–Glu-10 has biased composition (polar residues). The segment at Met-1–Glu-20 is disordered. In terms of domain architecture, RRM spans Thr-40–Asp-126. 6 WD repeats span residues Ala-193–Gln-230, Pro-232–Val-289, Gln-301–Lys-342, Ser-454–Ala-494, Ile-511–Asp-554, and Val-569–Ser-607. Positions Glu-693–Thr-720 are disordered. Positions Asp-702–Thr-720 are enriched in basic and acidic residues.

It belongs to the eIF-3 subunit B family. Component of the eukaryotic translation initiation factor 3 (eIF-3) complex.

It is found in the cytoplasm. RNA-binding component of the eukaryotic translation initiation factor 3 (eIF-3) complex, which is involved in protein synthesis of a specialized repertoire of mRNAs and, together with other initiation factors, stimulates binding of mRNA and methionyl-tRNAi to the 40S ribosome. The eIF-3 complex specifically targets and initiates translation of a subset of mRNAs involved in cell proliferation. The chain is Eukaryotic translation initiation factor 3 subunit B (prt1) from Emericella nidulans (strain FGSC A4 / ATCC 38163 / CBS 112.46 / NRRL 194 / M139) (Aspergillus nidulans).